A 151-amino-acid polypeptide reads, in one-letter code: Melatonin receptor type 1C (151 aa).

Over 1–13 (CHSLRYDRLYSRR) the chain is Cytoplasmic. Residues 14–34 (NTCLYLLLTWMLTALATVPNF) form a helical membrane-spanning segment. The Extracellular portion of the chain corresponds to 35–58 (LVGSLKYDPRVFSCTFTQTASSSY). Residues 59–79 (TVCVVLIHFLVPLGVVSFCYL) traverse the membrane as a helical segment. The Cytoplasmic segment spans residues 80–109 (RIWTLVIRVKGRVRPNPKVRAADLRNFLTM). The helical transmembrane segment at 110–130 (FVVFVLFAVCWAPLNFIGLAV) threads the bilayer. At 131–143 (AINPAKVAPNIPE) the chain is on the extracellular side. Residues 144-151 (WLFVTSYF) form a helical membrane-spanning segment.

It belongs to the G-protein coupled receptor 1 family.

The protein localises to the cell membrane. High affinity receptor for melatonin. The activity of this receptor is mediated by pertussis toxin sensitive G proteins that inhibits adenylate cyclase activity. In Danio rerio (Zebrafish), this protein is Melatonin receptor type 1C (mtnr1c).